We begin with the raw amino-acid sequence, 252 residues long: MSDWNPSLYLHFAAERSRPAVELLARVPLENVEYVADLGCGPGNSTALLHQRWPAARITGIDSSPAMIAEARSALPDCQFVEADIRNWQPEQALDLIFANASLQWLPDHYELFPHLVSLLNPQGVLAVQMPDNWLEPTHVLMREVAWEQNYSDRGREPLAGVHAYYDILSEAGCEVDIWRTTYYHQMPSRQAIIDWVTATGLRPWLQDLTESEQQLFLTRYHQMLEEQYPLQENGQILLAFPRLFIVARRTE.

This sequence belongs to the methyltransferase superfamily. Tam family.

Its subcellular location is the cytoplasm. It carries out the reaction trans-aconitate + S-adenosyl-L-methionine = (E)-3-(methoxycarbonyl)pent-2-enedioate + S-adenosyl-L-homocysteine. In terms of biological role, catalyzes the S-adenosylmethionine monomethyl esterification of trans-aconitate. The sequence is that of Trans-aconitate 2-methyltransferase from Shigella dysenteriae serotype 1 (strain Sd197).